The sequence spans 374 residues: MVSLNTNVAAMMTQRHLSQAADQNVESQRNLSSGYRINSASDDAAGLQISNTLHVQTRGIDVALRNAHDAYSVAQTAEGALHESSDILQRLRSLGLQAANGSHEQDDRKSLQQEVIALQDELDRVAITTTFADKNLFNGSYGSQSFHIGANANSISLALRNMRTHIPEMGGQHYLGDSLDKDWRVTRDNQQFAFEYQDNEGQAQSKVLTLKVGDNLEEVATYINAQQSVVDASVTQDHQLQFFTSTLNAPEGITWKGNFADEMDIGSGELVTVDDLDMSTVGGAQLAIGVVDAAIKYVDSHRSEIGGFQNRVSGTIDNLNTINRSVSESKGRIRDTDFARESTVMVRSQVLQDATTALLAQAKQRPSSALGLLS.

Positions serine 102–alanine 126 form a coiled coil.

Belongs to the bacterial flagellin family. As to quaternary structure, heteromer of multiple flagellin subunits including FlaA, FlaB/D, FlaC, FlaE and FlaF.

The protein resides in the secreted. The protein localises to the bacterial flagellum. Its function is as follows. Flagellin is the subunit protein which polymerizes to form the filaments of bacterial flagella. This Vibrio parahaemolyticus serotype O3:K6 (strain RIMD 2210633) protein is Polar flagellin E (flaE).